The chain runs to 142 residues: Large ribosomal subunit protein uL13c (142 aa).

The protein belongs to the universal ribosomal protein uL13 family. Part of the 50S ribosomal subunit.

It is found in the plastid. It localises to the chloroplast. This chain is Large ribosomal subunit protein uL13c, found in Porphyra purpurea (Red seaweed).